The following is a 303-amino-acid chain: Taste receptor type 2 member 13 (303 aa).

The Extracellular segment spans residues 1–7 (MESALLS). A helical transmembrane segment spans residues 8–28 (ILTLVIIAEFVIGNLSNGFXV). The Cytoplasmic portion of the chain corresponds to 29–55 (LINCIDWVSKRQLSSVDKILTFLAISR). Residues 56–76 (IGLIWELLVSWFLGLHYLAIF) form a helical membrane-spanning segment. Residues 77 to 85 (VSGTGLRIM) are Extracellular-facing. The helical transmembrane segment at 86–106 (IFSWVVSNHFSLWLATILSIF) threads the bilayer. The Cytoplasmic segment spans residues 107–128 (YLLKIASFSSPAFLYLKWRVNQ). A helical membrane pass occupies residues 129–149 (VILMILLGTLVFLFLNLIQIN). Topologically, residues 150–184 (IHIKDWLDRCERNTIWNFSMSGLPTFSVPVKFTMT) are extracellular. N-linked (GlcNAc...) asparagine glycosylation occurs at asparagine 166. Residues 185–205 (MFSLAPFTVALISFLLLIFSL) traverse the membrane as a helical segment. At 206–232 (RKHLQKMQLNYKGHREPRTKAHINALK) the chain is on the cytoplasmic side. The chain crosses the membrane as a helical span at residues 233–253 (IVISFLLLYASFFLCILISWI). Topologically, residues 254–261 (SELYQNTL) are extracellular. The helical transmembrane segment at 262-282 (IHMFCQTIGVFYPSSHSFLLI) threads the bilayer. Residues 283 to 303 (LGNPKLRQASLLVAAKVWAKR) are Cytoplasmic-facing.

It belongs to the G-protein coupled receptor T2R family.

It is found in the membrane. Its function is as follows. Receptor that may play a role in the perception of bitterness and is gustducin-linked. May play a role in sensing the chemical composition of the gastrointestinal content. The activity of this receptor may stimulate alpha gustducin, mediate PLC-beta-2 activation and lead to the gating of TRPM5. The polypeptide is Taste receptor type 2 member 13 (TAS2R13) (Papio hamadryas (Hamadryas baboon)).